The sequence spans 399 residues: uncharacterized protein (399 aa).

The interval 254 to 335 (SRVSTGDTSP…FFRDSDDDGD (82 aa)) is disordered. The segment covering 255-264 (RVSTGDTSPY) has biased composition (polar residues). The segment covering 310–329 (RNAEMKKSHSANDSEEFFRD) has biased composition (basic and acidic residues).

This is an uncharacterized protein from Xenopus laevis (African clawed frog).